Consider the following 203-residue polypeptide: uncharacterized protein (203 aa).

The signal sequence occupies residues 1–31 (MKKTFVKKAMLTTAAMTSAALLTFGPDAASA).

This is an uncharacterized protein from Bacillus subtilis (strain 168).